A 463-amino-acid chain; its full sequence is uncharacterized protein (463 aa).

The PE domain occupies 1–93; the sequence is MSYMIAVPDM…AGAYASAEAT (93 aa). 2 disordered regions span residues 231–320 and 408–463; these read GGAG…AGNG and NGGD…TPGQ. Residues 408–451 are compositionally biased toward gly residues; sequence NGGDGGKGGDAQLIGNGGNGGNGGKGGTGLMPGINGTGGAGGSR.

Belongs to the mycobacterial PE family. PGRS subfamily.

This is an uncharacterized protein from Mycobacterium tuberculosis (strain ATCC 25618 / H37Rv).